Consider the following 264-residue polypeptide: GATA transcription factor 2 (264 aa).

Residues serine 29 to serine 42 show a composition bias toward low complexity. Disordered stretches follow at residues serine 29–proline 57 and asparagine 96–tryptophan 192. The span at threonine 101–serine 110 shows a compositional bias: polar residues. The Nuclear localization signal motif lies at lysine 114–arginine 121. Over residues serine 155–arginine 164 the composition is skewed to gly residues. Residues glycine 175–leucine 229 form a GATA-type zinc finger.

The protein belongs to the type IV zinc-finger family. Class A subfamily. As to expression, mostly expressed in roots. Also expressed in flowers and leaves, and to a lower extent in stems.

It is found in the nucleus. Its function is as follows. Transcriptional activator that specifically binds 5'-GATA-3' or 5'-GAT-3' motifs within gene promoters. May be involved in the regulation of some light-responsive genes. The protein is GATA transcription factor 2 (GATA2) of Arabidopsis thaliana (Mouse-ear cress).